We begin with the raw amino-acid sequence, 231 residues long: Sensory transduction protein BceR (231 aa).

One can recognise a Response regulatory domain in the interval 3–116; sequence KLLLIEDDES…VLIAKIQAMF (114 aa). At Asp-52 the chain carries 4-aspartylphosphate. The ompR/PhoB-type DNA-binding region spans 127-225; sequence STIKTWCGAA…KVGQGYIAKE (99 aa).

Phosphorylated by BceS.

It is found in the cytoplasm. Member of the two-component regulatory system BceS/BceR involved in the regulation of bacitracin resistance. When activated by BceS, binds to the upstream region of the bceAB promoter and up-regulates the expression of these two genes. This chain is Sensory transduction protein BceR (bceR), found in Bacillus subtilis (strain 168).